Here is a 546-residue protein sequence, read N- to C-terminus: Probable protein kinase UbiB (546 aa).

Positions 123–501 (DFDETPLASA…SRRQGQARYL (379 aa)) constitute a Protein kinase domain. ATP is bound by residues 129–137 (LASASIAQV) and Lys-152. The active-site Proton acceptor is Asp-287. 2 helical membrane passes run 498–517 (ARYLLGVGASLLLAGVFLLT) and 522–541 (IEWGQISLAGAGLCWLLGWL).

This sequence belongs to the ABC1 family. UbiB subfamily.

The protein resides in the cell inner membrane. Its pathway is cofactor biosynthesis; ubiquinone biosynthesis [regulation]. Functionally, is probably a protein kinase regulator of UbiI activity which is involved in aerobic coenzyme Q (ubiquinone) biosynthesis. This is Probable protein kinase UbiB from Aeromonas hydrophila subsp. hydrophila (strain ATCC 7966 / DSM 30187 / BCRC 13018 / CCUG 14551 / JCM 1027 / KCTC 2358 / NCIMB 9240 / NCTC 8049).